A 213-amino-acid chain; its full sequence is MDTLWDISPPVSPATPVWPGDTPVAVERVWRMEAGSPVNVARLTLSPHTGAHCDAPLHYDADGAPIGAVPLDTYLGPCRVIHCIGASPVVRPADVEVALDGVPPRVLLRTYARAAVEQWDSAFCAVAPDTVDLLAAHGVKLIGIDTPSLDPQESKTMDAHHRVRAHRMAILEGIVLDDVPPGDYELIALPLKFATLDASPVRAVLRALPAHAS.

Residue Trp-18 participates in substrate binding. Residues His-48, His-52, and Asp-54 each coordinate Zn(2+). His-58 acts as the Proton donor/acceptor in catalysis. Zn(2+)-binding residues include His-160 and Glu-172.

This sequence belongs to the Cyclase 1 superfamily. KynB family. In terms of assembly, homodimer. Requires Zn(2+) as cofactor.

It catalyses the reaction N-formyl-L-kynurenine + H2O = L-kynurenine + formate + H(+). The protein operates within amino-acid degradation; L-tryptophan degradation via kynurenine pathway; L-kynurenine from L-tryptophan: step 2/2. Its function is as follows. Catalyzes the hydrolysis of N-formyl-L-kynurenine to L-kynurenine, the second step in the kynurenine pathway of tryptophan degradation. This is Kynurenine formamidase from Burkholderia orbicola (strain MC0-3).